The primary structure comprises 504 residues: Ribosomal protein uS12 methylthiotransferase RimO (504 aa).

Positions 19–135 (KKVGFVSLGC…ILAASGIEPR (117 aa)) constitute an MTTase N-terminal domain. [4Fe-4S] cluster-binding residues include Cys-28, Cys-64, Cys-98, Cys-214, Cys-218, and Cys-221. In terms of domain architecture, Radical SAM core spans 200–430 (ATPKYMAYIK…MSLQKQISKK (231 aa)). Residues 433 to 504 (KALIGREFDV…HDYDLVARLL (72 aa)) form the TRAM domain.

It belongs to the methylthiotransferase family. RimO subfamily. The cofactor is [4Fe-4S] cluster.

Its subcellular location is the cytoplasm. It catalyses the reaction L-aspartate(89)-[ribosomal protein uS12]-hydrogen + (sulfur carrier)-SH + AH2 + 2 S-adenosyl-L-methionine = 3-methylsulfanyl-L-aspartate(89)-[ribosomal protein uS12]-hydrogen + (sulfur carrier)-H + 5'-deoxyadenosine + L-methionine + A + S-adenosyl-L-homocysteine + 2 H(+). Functionally, catalyzes the methylthiolation of an aspartic acid residue of ribosomal protein uS12. In Koribacter versatilis (strain Ellin345), this protein is Ribosomal protein uS12 methylthiotransferase RimO.